The sequence spans 166 residues: Large ribosomal subunit protein uL10 (166 aa).

Belongs to the universal ribosomal protein uL10 family. In terms of assembly, part of the ribosomal stalk of the 50S ribosomal subunit. The N-terminus interacts with L11 and the large rRNA to form the base of the stalk. The C-terminus forms an elongated spine to which L12 dimers bind in a sequential fashion forming a multimeric L10(L12)X complex.

Forms part of the ribosomal stalk, playing a central role in the interaction of the ribosome with GTP-bound translation factors. This Streptococcus pyogenes serotype M18 (strain MGAS8232) protein is Large ribosomal subunit protein uL10 (rplJ).